The sequence spans 192 residues: Peptidyl-tRNA hydrolase (192 aa).

Residue Tyr-17 coordinates tRNA. The active-site Proton acceptor is His-22. TRNA contacts are provided by Phe-68, Asn-70, and Asn-116.

It belongs to the PTH family. Monomer.

It localises to the cytoplasm. The enzyme catalyses an N-acyl-L-alpha-aminoacyl-tRNA + H2O = an N-acyl-L-amino acid + a tRNA + H(+). Hydrolyzes ribosome-free peptidyl-tRNAs (with 1 or more amino acids incorporated), which drop off the ribosome during protein synthesis, or as a result of ribosome stalling. Its function is as follows. Catalyzes the release of premature peptidyl moieties from peptidyl-tRNA molecules trapped in stalled 50S ribosomal subunits, and thus maintains levels of free tRNAs and 50S ribosomes. This is Peptidyl-tRNA hydrolase from Xylella fastidiosa (strain Temecula1 / ATCC 700964).